We begin with the raw amino-acid sequence, 379 residues long: MSATEGKVITCKAAVAWEAKKPLVIEDIEVAPPKAHEVRIKITATGVCHTDAFTLSGADPEGLFPVVLGHEGAGIVESVGEGVTNFKAGDHVIALYIPQCNECKFCKSGKTNLCQKIRLTQGAGVMPEGTSRLSCKGQQLFHFMGTSTFAEYTVVADISLTKINEKAPLEKVCLLGCGISTGYGAALNTAKVEAGSTCAVWGLGAVGLAVGLGCKKAGAGKIYGIDINPDKFELAKKFGFTDFVNPKDVADKGSIQNYLIDLTDGGFDYTFECIGNVNTMRSALEATHKGWGTSVVIGVAGAGQEISTRPFQLVVGRVWKGSAFGGWRSVSDVPKLVEDYLKKDLLVDEFITHELPLSQINEAFDLMHKGESIRSIIKY.

At Ser-2 the chain carries N-acetylserine. Positions 48, 70, 100, 103, 106, 114, and 177 each coordinate Zn(2+).

Belongs to the zinc-containing alcohol dehydrogenase family. Class-III subfamily. It depends on Zn(2+) as a cofactor.

The catalysed reaction is a primary alcohol + NAD(+) = an aldehyde + NADH + H(+). The enzyme catalyses a secondary alcohol + NAD(+) = a ketone + NADH + H(+). It catalyses the reaction S-(hydroxymethyl)glutathione + NADP(+) = S-formylglutathione + NADPH + H(+). It carries out the reaction S-(hydroxymethyl)glutathione + NAD(+) = S-formylglutathione + NADH + H(+). The catalysed reaction is octan-1-ol + NAD(+) = octanal + NADH + H(+). In terms of biological role, class-III ADH is remarkably ineffective in oxidizing ethanol, but it readily catalyzes the oxidation of long-chain primary alcohols and the oxidation of S-(hydroxymethyl) glutathione. In Drosophila melanogaster (Fruit fly), this protein is Alcohol dehydrogenase class-3 (Fdh).